A 332-amino-acid chain; its full sequence is Protein FAM131B (332 aa).

Positions methionine 1–threonine 22 are disordered. Residues serine 47, serine 114, and serine 117 each carry the phosphoserine modification. The segment at leucine 221–asparagine 332 is disordered. Basic and acidic residues-rich tracts occupy residues proline 272–alanine 281 and alanine 288–proline 302. 3 positions are modified to phosphoserine: serine 295, serine 297, and serine 313. Threonine 316 is modified (phosphothreonine). Serine 317, serine 318, and serine 322 each carry phosphoserine. Residues phenylalanine 323–asparagine 332 show a composition bias toward acidic residues.

This sequence belongs to the FAM131 family.

This chain is Protein FAM131B (Fam131b), found in Rattus norvegicus (Rat).